A 132-amino-acid chain; its full sequence is uncharacterized protein (132 aa).

A disordered region spans residues 39–93 (HPAGASEALGALPPPRQLVEKRRVSPPRRLDQSGRDGGAVAKCSLSRGLSPPGWT). A compositionally biased stretch (basic and acidic residues) spans 56 to 72 (LVEKRRVSPPRRLDQSG).

This is an uncharacterized protein from Homo sapiens (Human).